Reading from the N-terminus, the 395-residue chain is GDP-mannose 4,6 dehydratase (395 aa).

Polar residues-rich tracts occupy residues 1-13 and 24-36; these read MLNTRLIAMSTSD and ESSSNGSKDQNGT. A disordered region spans residues 1 to 44; sequence MLNTRLIAMSTSDGAPETKKQRPESSSNGSKDQNGTEAGAEGDS. Residues 53–58, 109–110, 131–135, and Tyr-146 contribute to the NADP(+) site; these read GITGQD, DM, and LAAQS. Residue Thr-178 is part of the active site. Catalysis depends on nucleophile residues Glu-180 and Tyr-202. Residues Lys-206, His-232, and Arg-237 each coordinate NADP(+).

The protein belongs to the NAD(P)-dependent epimerase/dehydratase family. GDP-mannose 4,6-dehydratase subfamily. NADP(+) is required as a cofactor.

It catalyses the reaction GDP-alpha-D-mannose = GDP-4-dehydro-alpha-D-rhamnose + H2O. It participates in nucleotide-sugar biosynthesis; GDP-L-fucose biosynthesis via de novo pathway; GDP-L-fucose from GDP-alpha-D-mannose: step 1/2. Functionally, catalyzes the conversion of GDP-D-mannose to GDP-4-dehydro-6-deoxy-D-mannose (also known as GDP-4-keto-6-deoxy-D-mannose or GDP-4-dehydro-alpha-D-rhamnose), an essential step in the synthesis of GDP-fucose from GDP-mannose. This Drosophila melanogaster (Fruit fly) protein is GDP-mannose 4,6 dehydratase (Gmd).